Reading from the N-terminus, the 194-residue chain is MSRVFAYCRVSTLEQTTENQRREIEAAGFAIRPQRLIEEHISGSVAASERPGFIRLLDRMENGDVLIVTKLDRLGRNAMDIRKTVEQLASSDIRVHCLALGGVDLTSAAGRMTMQVISAVAEFERDLLLERTHSGIARAKATGKRFGRPSALNEEQQLTVIARINAGISISAIAREFNTTRQTILRVKAGQQSS.

The Resolvase/invertase-type recombinase catalytic domain occupies 3 to 143 (RVFAYCRVST…SGIARAKATG (141 aa)). The active-site O-(5'-phospho-DNA)-serine intermediate is S11. Positions 170–189 (ISAIAREFNTTRQTILRVKA) form a DNA-binding region, H-T-H motif.

It belongs to the site-specific recombinase resolvase family.

In terms of biological role, resolvase catalyzes the resolution (a site-specific recombination) of the cointegrated replicon to yield the final transposition products. This chain is Transposon Tn2501 resolvase (tnpR), found in Escherichia coli.